A 617-amino-acid polypeptide reads, in one-letter code: uncharacterized protein (617 aa).

A B12-binding N-terminal domain is found at 33–134 (TEDDFRGEKF…FXNATKQKGS (102 aa)). Methylcob(III)alamin-binding positions include E84, 146–150 (GDVHD), H149, S194, T198, and A251. The region spanning 136-272 (NGKVVIATVK…NPEGRAALWE (137 aa)) is the B12-binding domain. One can recognise an AdoMet activation domain in the interval 288-617 (SKPLRKQLSI…MMKWLGVAMK (330 aa)). S-adenosyl-L-methionine-binding positions include D337, R528, and 583-584 (YF).

It belongs to the vitamin-B12 dependent methionine synthase family.

This is an uncharacterized protein from Haemophilus influenzae (strain ATCC 51907 / DSM 11121 / KW20 / Rd).